We begin with the raw amino-acid sequence, 303 residues long: UDP-3-O-acyl-N-acetylglucosamine deacetylase (303 aa).

Zn(2+) contacts are provided by His78, His237, and Asp241. His264 serves as the catalytic Proton donor.

This sequence belongs to the LpxC family. Requires Zn(2+) as cofactor.

The catalysed reaction is a UDP-3-O-[(3R)-3-hydroxyacyl]-N-acetyl-alpha-D-glucosamine + H2O = a UDP-3-O-[(3R)-3-hydroxyacyl]-alpha-D-glucosamine + acetate. It functions in the pathway glycolipid biosynthesis; lipid IV(A) biosynthesis; lipid IV(A) from (3R)-3-hydroxytetradecanoyl-[acyl-carrier-protein] and UDP-N-acetyl-alpha-D-glucosamine: step 2/6. In terms of biological role, catalyzes the hydrolysis of UDP-3-O-myristoyl-N-acetylglucosamine to form UDP-3-O-myristoylglucosamine and acetate, the committed step in lipid A biosynthesis. This Pseudomonas fluorescens (strain Pf0-1) protein is UDP-3-O-acyl-N-acetylglucosamine deacetylase.